A 609-amino-acid chain; its full sequence is Autophagy-related protein 22-1 (609 aa).

The next 4 membrane-spanning stretches (helical) occupy residues 35-55 (YGWA…PITL), 117-137 (TASF…ILII), 151-171 (LLLM…LGVV), and 176-196 (MVGA…FVLL). Positions 214-231 (AREPRPALDDSRAQEGHS) are enriched in basic and acidic residues. The interval 214–240 (AREPRPALDDSRAQEGHSDTTNGIEHG) is disordered. An N-linked (GlcNAc...) asparagine glycan is attached at Asn-244. Residues 287–307 (IGIGYIGAIILQIVCILVVIA) traverse the membrane as a helical segment. The N-linked (GlcNAc...) asparagine glycan is linked to Asn-309. Helical transmembrane passes span 317–337 (LVLF…ALWL), 381–401 (ILLF…VSGT), and 415–435 (AALG…AFSW). Residue Asn-443 is glycosylated (N-linked (GlcNAc...) asparagine). The next 4 membrane-spanning stretches (helical) occupy residues 450–470 (IIAC…GFIP), 477–497 (FLGL…GLVM), 522–542 (ALYA…VGII), and 552–572 (AFVF…LVDV).

Belongs to the ATG22 family.

The protein localises to the vacuole membrane. Its function is as follows. Vacuolar effluxer which mediate the efflux of amino acids resulting from autophagic degradation. The release of autophagic amino acids allows the maintenance of protein synthesis and viability during nitrogen starvation. The chain is Autophagy-related protein 22-1 (atg22-1) from Aspergillus fumigatus (strain ATCC MYA-4609 / CBS 101355 / FGSC A1100 / Af293) (Neosartorya fumigata).